Consider the following 726-residue polypeptide: Procollagen-lysine,2-oxoglutarate 5-dioxygenase 1 (726 aa).

The N-terminal stretch at 1 to 18 is a signal peptide; the sequence is MRLLLLLAPLGWLLLAET. N-linked (GlcNAc...) asparagine glycosylation is found at N196 and N537. In terms of domain architecture, Fe2OG dioxygenase spans 635 to 726; the sequence is QFDLAFVVRY…RYIAVSFVDP (92 aa). Fe cation-binding residues include H655 and D657. Residue N685 is glycosylated (N-linked (GlcNAc...) asparagine). Residue H707 participates in Fe cation binding. R717 is a catalytic residue.

Homodimer. Identified in a complex with P3H3 and P3H4. The cofactor is Fe(2+). L-ascorbate serves as cofactor.

It localises to the rough endoplasmic reticulum membrane. The catalysed reaction is L-lysyl-[collagen] + 2-oxoglutarate + O2 = (5R)-5-hydroxy-L-lysyl-[collagen] + succinate + CO2. Part of a complex composed of PLOD1, P3H3 and P3H4 that catalyzes hydroxylation of lysine residues in collagen alpha chains and is required for normal assembly and cross-linkling of collagen fibrils. Forms hydroxylysine residues in -Xaa-Lys-Gly- sequences in collagens. These hydroxylysines serve as sites of attachment for carbohydrate units and are essential for the stability of the intermolecular collagen cross-links. This chain is Procollagen-lysine,2-oxoglutarate 5-dioxygenase 1 (PLOD1), found in Bos taurus (Bovine).